The sequence spans 662 residues: DNA ligase (662 aa).

Residues 34-38, 83-84, and E113 each bind NAD(+); these read DYEYD and SI. K115 serves as the catalytic N6-AMP-lysine intermediate. The NAD(+) site is built by R136, E172, K286, and K310. The Zn(2+) site is built by C404, C407, C422, and C427. The 80-residue stretch at 583 to 662 folds into the BRCT domain; it reads KSGSTCFGKA…EAFTNLIHLE (80 aa).

The protein belongs to the NAD-dependent DNA ligase family. LigA subfamily. Requires Mg(2+) as cofactor. The cofactor is Mn(2+).

The catalysed reaction is NAD(+) + (deoxyribonucleotide)n-3'-hydroxyl + 5'-phospho-(deoxyribonucleotide)m = (deoxyribonucleotide)n+m + AMP + beta-nicotinamide D-nucleotide.. Functionally, DNA ligase that catalyzes the formation of phosphodiester linkages between 5'-phosphoryl and 3'-hydroxyl groups in double-stranded DNA using NAD as a coenzyme and as the energy source for the reaction. It is essential for DNA replication and repair of damaged DNA. The sequence is that of DNA ligase from Chlamydia pneumoniae (Chlamydophila pneumoniae).